A 360-amino-acid chain; its full sequence is Phospho-N-acetylmuramoyl-pentapeptide-transferase (360 aa).

10 helical membrane-spanning segments follow: residues 26 to 46 (SIMA…KVIN), 73 to 93 (TMGG…WADL), 98 to 118 (VWFT…DDYW), 132 to 152 (WKYF…YAMG), 168 to 188 (VMPQ…VGTS), 199 to 219 (GLAI…AWAT), 236 to 256 (SGEL…FLWY), 263 to 283 (VFMG…IAVL), 288 to 308 (LLLL…ILQV), and 338 to 358 (VIVR…VTLK).

This sequence belongs to the glycosyltransferase 4 family. MraY subfamily. Requires Mg(2+) as cofactor.

Its subcellular location is the cell inner membrane. The catalysed reaction is UDP-N-acetyl-alpha-D-muramoyl-L-alanyl-gamma-D-glutamyl-meso-2,6-diaminopimeloyl-D-alanyl-D-alanine + di-trans,octa-cis-undecaprenyl phosphate = di-trans,octa-cis-undecaprenyl diphospho-N-acetyl-alpha-D-muramoyl-L-alanyl-D-glutamyl-meso-2,6-diaminopimeloyl-D-alanyl-D-alanine + UMP. Its pathway is cell wall biogenesis; peptidoglycan biosynthesis. Catalyzes the initial step of the lipid cycle reactions in the biosynthesis of the cell wall peptidoglycan: transfers peptidoglycan precursor phospho-MurNAc-pentapeptide from UDP-MurNAc-pentapeptide onto the lipid carrier undecaprenyl phosphate, yielding undecaprenyl-pyrophosphoryl-MurNAc-pentapeptide, known as lipid I. The sequence is that of Phospho-N-acetylmuramoyl-pentapeptide-transferase from Haemophilus ducreyi (strain 35000HP / ATCC 700724).